The primary structure comprises 447 residues: Phosphoglucosamine mutase (447 aa).

Ser101 acts as the Phosphoserine intermediate in catalysis. Residues Ser101, Asp242, Asp244, and Asp246 each coordinate Mg(2+). Position 101 is a phosphoserine (Ser101).

It belongs to the phosphohexose mutase family. Mg(2+) is required as a cofactor. Activated by phosphorylation.

The catalysed reaction is alpha-D-glucosamine 1-phosphate = D-glucosamine 6-phosphate. Functionally, catalyzes the conversion of glucosamine-6-phosphate to glucosamine-1-phosphate. The protein is Phosphoglucosamine mutase of Azorhizobium caulinodans (strain ATCC 43989 / DSM 5975 / JCM 20966 / LMG 6465 / NBRC 14845 / NCIMB 13405 / ORS 571).